We begin with the raw amino-acid sequence, 299 residues long: ATP phosphoribosyltransferase (299 aa).

This sequence belongs to the ATP phosphoribosyltransferase family. Long subfamily. As to quaternary structure, equilibrium between an active dimeric form, an inactive hexameric form and higher aggregates. Interconversion between the various forms is largely reversible and is influenced by the natural substrates and inhibitors of the enzyme. Mg(2+) serves as cofactor.

The protein resides in the cytoplasm. It catalyses the reaction 1-(5-phospho-beta-D-ribosyl)-ATP + diphosphate = 5-phospho-alpha-D-ribose 1-diphosphate + ATP. It functions in the pathway amino-acid biosynthesis; L-histidine biosynthesis; L-histidine from 5-phospho-alpha-D-ribose 1-diphosphate: step 1/9. Feedback inhibited by histidine. Its function is as follows. Catalyzes the condensation of ATP and 5-phosphoribose 1-diphosphate to form N'-(5'-phosphoribosyl)-ATP (PR-ATP). Has a crucial role in the pathway because the rate of histidine biosynthesis seems to be controlled primarily by regulation of HisG enzymatic activity. In Klebsiella pneumoniae (strain 342), this protein is ATP phosphoribosyltransferase.